Here is a 334-residue protein sequence, read N- to C-terminus: Beta-ketoacyl-[acyl-carrier-protein] synthase III (334 aa).

Active-site residues include cysteine 114 and histidine 253. Positions glutamine 254–arginine 258 are ACP-binding. Asparagine 283 is an active-site residue.

The protein belongs to the thiolase-like superfamily. FabH family. As to quaternary structure, homodimer.

It localises to the cytoplasm. The enzyme catalyses malonyl-[ACP] + acetyl-CoA + H(+) = 3-oxobutanoyl-[ACP] + CO2 + CoA. The protein operates within lipid metabolism; fatty acid biosynthesis. Catalyzes the condensation reaction of fatty acid synthesis by the addition to an acyl acceptor of two carbons from malonyl-ACP. Catalyzes the first condensation reaction which initiates fatty acid synthesis and may therefore play a role in governing the total rate of fatty acid production. Possesses both acetoacetyl-ACP synthase and acetyl transacylase activities. Its substrate specificity determines the biosynthesis of branched-chain and/or straight-chain of fatty acids. The protein is Beta-ketoacyl-[acyl-carrier-protein] synthase III of Campylobacter curvus (strain 525.92).